A 281-amino-acid polypeptide reads, in one-letter code: Small ribosomal subunit protein uS2 (281 aa).

This sequence belongs to the universal ribosomal protein uS2 family.

This is Small ribosomal subunit protein uS2 (rpsB) from Chlamydia muridarum (strain MoPn / Nigg).